A 270-amino-acid chain; its full sequence is MSRLQTRFAELKEQNRAALVTFVTAGDPDYDTSLAILKGLPKAGADVIELGMPFTDPMADGPAIQLANIRALGAKQNLTKTLQMVREFREGNSDTPLVLMGYFNPIHKFGVERFIAEAKEAGVDGLIVVDMPPEHNSELCDPAQAAGIDFIRLTTPTTDDARLPKVLNGSSGFVYYVSVAGVTGAGAATLEHVEEAVARLRRHTDLPISIGFGIRTPEQAASIARLADGVVVGSALIDHIANATTPDQAIDGVLSLCSALSEGVRKARVS.

Catalysis depends on proton acceptor residues Glu49 and Asp60.

This sequence belongs to the TrpA family. As to quaternary structure, tetramer of two alpha and two beta chains.

It carries out the reaction (1S,2R)-1-C-(indol-3-yl)glycerol 3-phosphate + L-serine = D-glyceraldehyde 3-phosphate + L-tryptophan + H2O. Its pathway is amino-acid biosynthesis; L-tryptophan biosynthesis; L-tryptophan from chorismate: step 5/5. In terms of biological role, the alpha subunit is responsible for the aldol cleavage of indoleglycerol phosphate to indole and glyceraldehyde 3-phosphate. This Pseudomonas fluorescens (strain Pf0-1) protein is Tryptophan synthase alpha chain.